The sequence spans 83 residues: uncharacterized protein (83 aa).

This sequence belongs to the chlamydial CPn_0710/CT_666/TC_0037 family.

This is an uncharacterized protein from Chlamydia trachomatis serovar D (strain ATCC VR-885 / DSM 19411 / UW-3/Cx).